The primary structure comprises 592 residues: Calnexin (592 aa).

A signal peptide spans 1 to 20 (MEGKWLLCMLLVLGTAIVEA). Residues 21–481 (HDGHDDDVID…QMIEAAEERP (461 aa)) are Lumenal-facing. The Ca(2+) site is built by S74 and D117. N6-acetyllysine is present on K137. The cysteines at positions 160 and 194 are disulfide-linked. Y164, K166, Y185, and D192 together coordinate an alpha-D-glucoside. The interval 260 to 345 (GNLLNDMTPP…AEKPEDWDED (86 aa)) is disordered. Residues 274-319 (REIEDPEDRKPEDWDERPKIPDPEAVKPDDWDEDAPAKIPDEEATK) show a composition bias toward basic and acidic residues. The tract at residues 276-409 (IEDPEDRKPE…RKIPNPDFFE (134 aa)) is p domain (Extended arm). 5 repeat units span residues 278 to 290 (DPED…WDER), 295 to 307 (DPEA…WDED), 314 to 326 (DEEA…WLDD), 333 to 345 (DPDA…WDED), and 348 to 358 (GEWEAPQIANP). 4 X approximate repeats regions lie at residues 278-345 (DPED…WDED) and 348-405 (GEWE…IPNP). The segment covering 323–345 (WLDDEPEYVPDPDAEKPEDWDED) has biased composition (acidic residues). Positions 326–359 (DEPEYVPDPDAEKPEDWDEDMDGEWEAPQIANPR) are interaction with PPIB. Cysteines 360 and 366 form a disulfide. A run of 3 repeats spans residues 367–377 (GVWQRPVIDNP), 381–391 (GKWKPPMIDNP), and 395–405 (GIWKPRKIPNP). Residue E425 participates in an alpha-D-glucoside binding. D436 contributes to the Ca(2+) binding site. A helical transmembrane segment spans residues 482–502 (WLWVVYILTVALPVFLVILFC). S-palmitoyl cysteine attachment occurs at residues C502 and C503. The Cytoplasmic portion of the chain corresponds to 503-592 (CSGKKQTSGM…SPRNRKPRRE (90 aa)). Residues 503-592 (CSGKKQTSGM…SPRNRKPRRE (90 aa)) form a sufficient to mediate interaction with SGIP1 region. Positions 511–592 (GMEYKKTDAP…SPRNRKPRRE (82 aa)) are disordered. A compositionally biased stretch (acidic residues) spans 525-547 (KEEEEEKEEEKDKGDEEEEGEEK). S554 is modified (phosphoserine). Residue T562 is modified to Phosphothreonine. The residue at position 564 (S564) is a Phosphoserine; by MAPK3. Residue S583 is modified to Phosphoserine.

The protein belongs to the calreticulin family. Interacts with MAPK3/ERK1. Interacts with KCNH2. Associates with ribosomes. Interacts with SGIP1; involved in negative regulation of endocytosis. The palmitoylated form interacts with the ribosome-translocon complex component SSR1, promoting efficient folding of glycoproteins. Interacts with SERPINA2P/SERPINA2 and with the S and Z variants of SERPINA1. Interacts with PPIB. Interacts with ZNRF4. Interacts with SMIM22. Interacts with TMX2. Interacts with TMEM35A/NACHO. Interacts with CHRNA7. Interacts with reticulophagy regulators RETREG2 and RETREG3. Interacts with DNM1L; may form part of a larger protein complex at the ER-mitochondrial interface during mitochondrial fission. Interacts with ADAM7. As to quaternary structure, (Microbial infection) Interacts with HBV large envelope protein, isoform L. In terms of assembly, (Microbial infection) Interacts with HBV large envelope protein, isoform M; this association may be essential for isoform M proper secretion. Post-translationally, phosphorylated at Ser-564 by MAPK3/ERK1. Phosphorylation by MAPK3/ERK1 increases its association with ribosomes. In terms of processing, palmitoylation by DHHC6 leads to the preferential localization to the perinuclear rough ER. It mediates the association of calnexin with the ribosome-translocon complex (RTC) which is required for efficient folding of glycosylated proteins. Ubiquitinated, leading to proteasomal degradation. Probably ubiquitinated by ZNRF4.

It is found in the endoplasmic reticulum membrane. It localises to the mitochondrion membrane. The protein localises to the melanosome membrane. Functionally, calcium-binding protein that interacts with newly synthesized monoglucosylated glycoproteins in the endoplasmic reticulum. It may act in assisting protein assembly and/or in the retention within the ER of unassembled protein subunits. It seems to play a major role in the quality control apparatus of the ER by the retention of incorrectly folded proteins. Associated with partial T-cell antigen receptor complexes that escape the ER of immature thymocytes, it may function as a signaling complex regulating thymocyte maturation. Additionally it may play a role in receptor-mediated endocytosis at the synapse. The polypeptide is Calnexin (CANX) (Homo sapiens (Human)).